A 125-amino-acid polypeptide reads, in one-letter code: Putative glutaredoxin-C2 (125 aa).

The region spanning 2 to 103 is the Glutaredoxin domain; sequence AERVARLSSQ…PLLREAGALW (102 aa). C22 and C25 are joined by a disulfide.

The protein belongs to the glutaredoxin family. CC-type subfamily.

It localises to the cytoplasm. Functionally, has a glutathione-disulfide oxidoreductase activity in the presence of NADPH and glutathione reductase. Reduces low molecular weight disulfides and proteins. The polypeptide is Putative glutaredoxin-C2 (GRXC2) (Oryza sativa subsp. japonica (Rice)).